Reading from the N-terminus, the 117-residue chain is Large ribosomal subunit protein bL17 (117 aa).

Belongs to the bacterial ribosomal protein bL17 family. As to quaternary structure, part of the 50S ribosomal subunit. Contacts protein L32.

The polypeptide is Large ribosomal subunit protein bL17 (Coprothermobacter proteolyticus (strain ATCC 35245 / DSM 5265 / OCM 4 / BT)).